A 32-amino-acid polypeptide reads, in one-letter code: Kappa-conotoxin SrXIA (32 aa).

Intrachain disulfides connect Cys-1–Cys-15, Cys-8–Cys-20, Cys-14–Cys-24, and Cys-19–Cys-28. 4-carboxyglutamate occurs at positions 9 and 10. Residue Pro-32 is modified to Proline amide.

Belongs to the conotoxin I2 superfamily. In terms of tissue distribution, expressed by the venom duct.

It is found in the secreted. Functionally, kappa-conotoxins bind and inhibit voltage-gated potassium channels. This toxin inhibits Kv1.2/KCNA2 and Kv1.6/KCNA6. Produces stiffening of body, limbs and tail when injected intracranially into mice. The protein is Kappa-conotoxin SrXIA of Conus spurius (Alphabet cone).